We begin with the raw amino-acid sequence, 483 residues long: 6-phosphogluconate dehydrogenase, decarboxylating 1 (483 aa).

NADP(+) is bound by residues 11 to 16 (GLAVMG), 34 to 36 (NRT), 78 to 80 (VKA), and Asn-106. Substrate is bound by residues Asn-106 and 132–134 (SGG). Residue Lys-186 is the Proton acceptor of the active site. 189–190 (HN) is a substrate binding site. The Proton donor role is filled by Glu-193. Tyr-194, Lys-264, Arg-291, Arg-454, and His-460 together coordinate substrate.

Belongs to the 6-phosphogluconate dehydrogenase family. In terms of assembly, homodimer.

The protein resides in the cytoplasm. The catalysed reaction is 6-phospho-D-gluconate + NADP(+) = D-ribulose 5-phosphate + CO2 + NADPH. The protein operates within carbohydrate degradation; pentose phosphate pathway; D-ribulose 5-phosphate from D-glucose 6-phosphate (oxidative stage): step 3/3. In terms of biological role, catalyzes the oxidative decarboxylation of 6-phosphogluconate to ribulose 5-phosphate and CO(2), with concomitant reduction of NADP to NADPH. In Spinacia oleracea (Spinach), this protein is 6-phosphogluconate dehydrogenase, decarboxylating 1 (pgdC).